The sequence spans 262 residues: Octopine permease ATP-binding protein P (262 aa).

Residues 9-254 (VQLKDIRKNF…PRTDRFRQFL (246 aa)) form the ABC transporter domain. 41 to 48 (GSSGSGKS) contributes to the ATP binding site.

Belongs to the ABC transporter superfamily.

The protein resides in the cell inner membrane. In terms of biological role, component of the octopine active transport system probably consisting of four subunits: Q, M, P and T. The chain is Octopine permease ATP-binding protein P (occP) from Rhizobium radiobacter (Agrobacterium tumefaciens).